The primary structure comprises 520 residues: 4-hydroxyphenylacetate 3-monooxygenase oxygenase component (520 aa).

It belongs to the FADH(2)-utilizing monooxygenase family. As to quaternary structure, 4-HPA 3-monooxygenase consists of a reductase component HpaC and an oxygenase component HpaB.

The catalysed reaction is 4-hydroxyphenylacetate + FADH2 + O2 = 3,4-dihydroxyphenylacetate + FAD + H2O + H(+). It functions in the pathway aromatic compound metabolism; 4-hydroxyphenylacetate degradation; pyruvate and succinate semialdehyde from 4-hydroxyphenylacetate: step 1/7. Functionally, utilizes FADH(2) supplied by HpaC or by another flavin reductase, to catalyze the hydroxylation of 4-hydroxyphenylacetic acid, leading to the production of 3,4-DHPA. Can also oxidize phenol to catechol, and hydroxylate other phenol derivatives. This is 4-hydroxyphenylacetate 3-monooxygenase oxygenase component (hpaB) from Escherichia coli.